Reading from the N-terminus, the 144-residue chain is NADH dehydrogenase [ubiquinone] 1 alpha subcomplex subunit 13 (144 aa).

Alanine 2 is subject to N-acetylalanine. Residues leucine 30–methionine 51 form a helical membrane-spanning segment.

As to quaternary structure, complex I is composed of 45 different subunits. Interacts with CARD15, but not with CARD4. Interacts with STAT3, but not with STAT1, STAT2 and STAT5A. Interacts with OLFM4.

The protein localises to the mitochondrion inner membrane. The protein resides in the nucleus. Accessory subunit of the mitochondrial membrane respiratory chain NADH dehydrogenase (Complex I), that is believed not to be involved in catalysis. Complex I functions in the transfer of electrons from NADH to the respiratory chain. The immediate electron acceptor for the enzyme is believed to be ubiquinone. Involved in the interferon/all-trans-retinoic acid (IFN/RA) induced cell death. This apoptotic activity is inhibited by interaction with viral IRF1. Prevents the transactivation of STAT3 target genes. May play a role in CARD15-mediated innate mucosal responses and serve to regulate intestinal epithelial cell responses to microbes. The protein is NADH dehydrogenase [ubiquinone] 1 alpha subcomplex subunit 13 (NDUFA13) of Bos taurus (Bovine).